A 93-amino-acid polypeptide reads, in one-letter code: Small ribosomal subunit protein uS19 (93 aa).

The protein belongs to the universal ribosomal protein uS19 family.

Protein S19 forms a complex with S13 that binds strongly to the 16S ribosomal RNA. This chain is Small ribosomal subunit protein uS19, found in Dehalococcoides mccartyi (strain ATCC BAA-2100 / JCM 16839 / KCTC 5957 / BAV1).